The sequence spans 240 residues: Ribonuclease PH (240 aa).

Residues R87 and G125–R127 each bind phosphate.

This sequence belongs to the RNase PH family. Homohexameric ring arranged as a trimer of dimers.

The catalysed reaction is tRNA(n+1) + phosphate = tRNA(n) + a ribonucleoside 5'-diphosphate. Functionally, phosphorolytic 3'-5' exoribonuclease that plays an important role in tRNA 3'-end maturation. Removes nucleotide residues following the 3'-CCA terminus of tRNAs; can also add nucleotides to the ends of RNA molecules by using nucleoside diphosphates as substrates, but this may not be physiologically important. Probably plays a role in initiation of 16S rRNA degradation (leading to ribosome degradation) during starvation. In Ruminiclostridium cellulolyticum (strain ATCC 35319 / DSM 5812 / JCM 6584 / H10) (Clostridium cellulolyticum), this protein is Ribonuclease PH.